A 215-amino-acid polypeptide reads, in one-letter code: UPF0126 membrane protein DR_2368 (215 aa).

Helical transmembrane passes span 15 to 35 (LHWL…LLGV), 39 to 59 (FDLF…GAIR), 75 to 95 (TYLW…ERLA), 101 to 121 (LSLF…LGAI), 123 to 143 (IGLG…GGGI), and 162 to 182 (LYAT…PHFT).

This sequence belongs to the UPF0126 family.

Its subcellular location is the cell membrane. The protein is UPF0126 membrane protein DR_2368 of Deinococcus radiodurans (strain ATCC 13939 / DSM 20539 / JCM 16871 / CCUG 27074 / LMG 4051 / NBRC 15346 / NCIMB 9279 / VKM B-1422 / R1).